Reading from the N-terminus, the 131-residue chain is C-C motif chemokine 21 (131 aa).

The N-terminal stretch at Met1–Gly23 is a signal peptide. Intrachain disulfides connect Cys31–Cys57, Cys32–Cys75, and Cys103–Cys119. Residues His89–Pro131 form a disordered region.

It belongs to the intercrine beta (chemokine CC) family. In terms of assembly, monomer. Binds to CCR7. Interacts with PDPN; relocalizes PDPN to the basolateral membrane. Interacts with TNFAIP6 (via Link domain). Interacts with GPR174.

It is found in the secreted. Functionally, inhibits hemopoiesis and stimulates chemotaxis. Chemotactic in vitro for thymocytes and activated T-cells, but not for B-cells, macrophages, or neutrophils. Shows preferential activity towards naive T-cells. May play a role in mediating homing of lymphocytes to secondary lymphoid organs. Binds to atypical chemokine receptor ACKR4 and mediates the recruitment of beta-arrestin (ARRB1/2) to ACKR4. The chain is C-C motif chemokine 21 (CCL21) from Macaca mulatta (Rhesus macaque).